Reading from the N-terminus, the 784-residue chain is DNA repair and recombination protein RAD54-like (784 aa).

Residues Met1 to Ala50 are disordered. Positions Arg2 to Gln9 are required for chromatin remodeling, strand pairing activities and coupling of ATPase activity. Ser20 carries the post-translational modification Phosphoserine. Thr22 is modified (phosphothreonine). The span at Glu36–Arg47 shows a compositional bias: basic and acidic residues. The Helicase ATP-binding domain occupies Glu172–Glu346. Residue Asp185–Thr192 participates in ATP binding. The DEGH box signature appears at Asp297–His300. The Helicase C-terminal domain occupies Leu503 to Thr660. Low complexity predominate over residues Val747–Glu756. Positions Val747–Phe784 are disordered. The span at Asp775–Phe784 shows a compositional bias: acidic residues.

Belongs to the SNF2/RAD54 helicase family. Interacts (via N-terminus) with spn-A/Rad51.

The protein localises to the nucleus. Functionally, involved in mitotic DNA repair and meiotic recombination. Functions in the recombinational DNA repair pathway. Essential for interhomolog gene conversion (GC), but may have a less important role in intersister GC than spn-A/Rad51. In the presence of DNA, spn-A/Rad51 enhances the ATPase activity of okr/Rad54. This Drosophila erecta (Fruit fly) protein is DNA repair and recombination protein RAD54-like.